The following is a 556-amino-acid chain: Guanosine-diphosphatase (556 aa).

Topologically, residues 1–12 are cytoplasmic; sequence MTPTMKSIARRK. Residues 13 to 33 form a helical; Signal-anchor for type II membrane protein membrane-spanning segment; sequence ALLIALSIFAVTFILWNGFPG. Topologically, residues 34-556 are lumenal; it reads SSNRPLPSSN…GWNCNVKEEI (523 aa). The active-site Proton acceptor is the glutamate 256. Asparagine 372 is a glycosylation site (N-linked (GlcNAc...) asparagine).

It belongs to the GDA1/CD39 NTPase family. Ca(2+) serves as cofactor. Mn(2+) is required as a cofactor.

The protein resides in the golgi apparatus membrane. The enzyme catalyses GDP + H2O = GMP + phosphate + H(+). It participates in protein modification; protein glycosylation. In terms of biological role, after transfer of sugars to endogenous macromolecular acceptors, the enzyme converts nucleoside diphosphates to nucleoside monophosphates which in turn exit the Golgi lumen in a coupled antiporter reaction, allowing entry of additional nucleotide sugar from the cytosol. In Schizosaccharomyces pombe (strain 972 / ATCC 24843) (Fission yeast), this protein is Guanosine-diphosphatase (gdp1).